The following is a 403-amino-acid chain: D-galactonate dehydratase family member RspA (403 aa).

Residues asparagine 37 and histidine 122 each coordinate substrate. Catalysis depends on tyrosine 159, which acts as the Proton donor/acceptor. Aspartate 211 is a binding site for Mg(2+). The active-site Proton donor/acceptor is histidine 213. Mg(2+) is bound by residues glutamate 237 and glutamate 263. Substrate-binding residues include glutamate 263, arginine 284, histidine 313, aspartate 317, and glutamate 340.

This sequence belongs to the mandelate racemase/muconate lactonizing enzyme family. GalD subfamily. It depends on Mg(2+) as a cofactor.

The catalysed reaction is D-mannonate = 2-dehydro-3-deoxy-D-gluconate + H2O. The enzyme catalyses D-gluconate = 2-dehydro-3-deoxy-D-gluconate + H2O. Its function is as follows. Has low dehydratase activity with D-mannonate and D-gluconate, suggesting that these are not physiological substrates and that it has no significant role in the in vivo degradation of these compounds. Has no detectable activity with a panel of 70 other acid sugars (in vitro). This is D-galactonate dehydratase family member RspA (rspA) from Halomonas elongata (strain ATCC 33173 / DSM 2581 / NBRC 15536 / NCIMB 2198 / 1H9).